Consider the following 480-residue polypeptide: Methylenetetrahydrofolate--tRNA-(uracil-5-)-methyltransferase TrmFO (480 aa).

Position 15–20 (15–20 (GGGLAG)) interacts with FAD.

It belongs to the MnmG family. TrmFO subfamily. Requires FAD as cofactor.

It is found in the cytoplasm. It catalyses the reaction uridine(54) in tRNA + (6R)-5,10-methylene-5,6,7,8-tetrahydrofolate + NADH + H(+) = 5-methyluridine(54) in tRNA + (6S)-5,6,7,8-tetrahydrofolate + NAD(+). It carries out the reaction uridine(54) in tRNA + (6R)-5,10-methylene-5,6,7,8-tetrahydrofolate + NADPH + H(+) = 5-methyluridine(54) in tRNA + (6S)-5,6,7,8-tetrahydrofolate + NADP(+). Catalyzes the folate-dependent formation of 5-methyl-uridine at position 54 (M-5-U54) in all tRNAs. This is Methylenetetrahydrofolate--tRNA-(uracil-5-)-methyltransferase TrmFO from Sinorhizobium medicae (strain WSM419) (Ensifer medicae).